Consider the following 351-residue polypeptide: Mitochondrial mRNA pseudouridine synthase RPUSD3 (351 aa).

Residues 1–25 constitute a mitochondrion transit peptide; that stretch reads MRAVLAREMDGRRVLGRFWSGWRRG. A disordered region spans residues 33-58; the sequence is EDAGFGTEARHQRQPRGSCQRSGPLG. Ser-71 is subject to Phosphoserine.

The protein belongs to the pseudouridine synthase RluA family. As to quaternary structure, forms a regulatory protein-RNA complex, consisting of RCC1L, NGRN, RPUSD3, RPUSD4, TRUB2, FASTKD2 and 16S mt-rRNA.

The protein resides in the mitochondrion matrix. It carries out the reaction a uridine in mRNA = a pseudouridine in mRNA. In terms of biological role, catalyzes uridine to pseudouridine isomerization (pseudouridylation) of specific mitochondrial mRNAs (mt-mRNAs), a post-transcriptional modification necessary for their translation. Acts at position 390 in COXI mt-mRNA and at position 697-699 in mitochondrial COXIII mt-mRNA. As a component of a functional protein-RNA module, consisting of RCC1L, NGRN, RPUSD3, RPUSD4, TRUB2, FASTKD2 and 16S mitochondrial ribosomal RNA (16S mt-rRNA), controls 16S mt-rRNA abundance and may play a role in mitochondrial ribosome biogenesis. This is Mitochondrial mRNA pseudouridine synthase RPUSD3 from Homo sapiens (Human).